Consider the following 248-residue polypeptide: 4-hydroxy-tetrahydrodipicolinate reductase (248 aa).

Residues 9-14 (GAQGRV), 77-79 (GTT), and 104-107 (APNF) contribute to the NAD(+) site. His134 serves as the catalytic Proton donor/acceptor. Residue His135 coordinates (S)-2,3,4,5-tetrahydrodipicolinate. Lys138 (proton donor) is an active-site residue. 144–145 (GT) is a binding site for (S)-2,3,4,5-tetrahydrodipicolinate. Residues 157-176 (RREAGMPTQPDATEQSLDGA) form a disordered region.

This sequence belongs to the DapB family.

It localises to the cytoplasm. The catalysed reaction is (S)-2,3,4,5-tetrahydrodipicolinate + NAD(+) + H2O = (2S,4S)-4-hydroxy-2,3,4,5-tetrahydrodipicolinate + NADH + H(+). It carries out the reaction (S)-2,3,4,5-tetrahydrodipicolinate + NADP(+) + H2O = (2S,4S)-4-hydroxy-2,3,4,5-tetrahydrodipicolinate + NADPH + H(+). It functions in the pathway amino-acid biosynthesis; L-lysine biosynthesis via DAP pathway; (S)-tetrahydrodipicolinate from L-aspartate: step 4/4. Functionally, catalyzes the conversion of 4-hydroxy-tetrahydrodipicolinate (HTPA) to tetrahydrodipicolinate. This Corynebacterium diphtheriae (strain ATCC 700971 / NCTC 13129 / Biotype gravis) protein is 4-hydroxy-tetrahydrodipicolinate reductase.